The chain runs to 215 residues: 3-isopropylmalate dehydratase small subunit (215 aa).

Belongs to the LeuD family. LeuD type 1 subfamily. In terms of assembly, heterodimer of LeuC and LeuD.

It carries out the reaction (2R,3S)-3-isopropylmalate = (2S)-2-isopropylmalate. It functions in the pathway amino-acid biosynthesis; L-leucine biosynthesis; L-leucine from 3-methyl-2-oxobutanoate: step 2/4. In terms of biological role, catalyzes the isomerization between 2-isopropylmalate and 3-isopropylmalate, via the formation of 2-isopropylmaleate. The protein is 3-isopropylmalate dehydratase small subunit of Xanthomonas euvesicatoria pv. vesicatoria (strain 85-10) (Xanthomonas campestris pv. vesicatoria).